The following is a 319-amino-acid chain: 1-aminocyclopropane-1-carboxylate oxidase 1 (319 aa).

The Fe2OG dioxygenase domain occupies 153 to 253 (PNFGTKVSNY…RMSLASFYNP (101 aa)). 3 residues coordinate Fe cation: His-177, Asp-179, and His-234.

It belongs to the iron/ascorbate-dependent oxidoreductase family. The cofactor is Fe cation.

The catalysed reaction is 1-aminocyclopropane-1-carboxylate + L-ascorbate + O2 = ethene + L-dehydroascorbate + hydrogen cyanide + CO2 + 2 H2O. The protein operates within alkene biosynthesis; ethylene biosynthesis via S-adenosyl-L-methionine; ethylene from S-adenosyl-L-methionine: step 2/2. In Petunia hybrida (Petunia), this protein is 1-aminocyclopropane-1-carboxylate oxidase 1 (ACO1).